A 273-amino-acid chain; its full sequence is Dermonecrotic toxin LarSicTox-alphaVII1 (273 aa).

The active site involves H5. The Mg(2+) site is built by E25 and D27. H41 (nucleophile) is an active-site residue. 2 cysteine pairs are disulfide-bonded: C45–C51 and C47–C192. D85 lines the Mg(2+) pocket.

Belongs to the arthropod phospholipase D family. Class II subfamily. The cofactor is Mg(2+). Expressed by the venom gland.

It localises to the secreted. The catalysed reaction is an N-(acyl)-sphingosylphosphocholine = an N-(acyl)-sphingosyl-1,3-cyclic phosphate + choline. It catalyses the reaction an N-(acyl)-sphingosylphosphoethanolamine = an N-(acyl)-sphingosyl-1,3-cyclic phosphate + ethanolamine. The enzyme catalyses a 1-acyl-sn-glycero-3-phosphocholine = a 1-acyl-sn-glycero-2,3-cyclic phosphate + choline. It carries out the reaction a 1-acyl-sn-glycero-3-phosphoethanolamine = a 1-acyl-sn-glycero-2,3-cyclic phosphate + ethanolamine. Functionally, dermonecrotic toxins cleave the phosphodiester linkage between the phosphate and headgroup of certain phospholipids (sphingolipid and lysolipid substrates), forming an alcohol (often choline) and a cyclic phosphate. This toxin acts on sphingomyelin (SM). It may also act on ceramide phosphoethanolamine (CPE), lysophosphatidylcholine (LPC) and lysophosphatidylethanolamine (LPE), but not on lysophosphatidylserine (LPS), and lysophosphatidylglycerol (LPG). It acts by transphosphatidylation, releasing exclusively cyclic phosphate products as second products. Induces dermonecrosis, hemolysis, increased vascular permeability, edema, inflammatory response, and platelet aggregation. This is Dermonecrotic toxin LarSicTox-alphaVII1 from Loxosceles arizonica (Arizona brown spider).